The primary structure comprises 382 residues: Carbamoyl phosphate synthase small chain (382 aa).

Residues 1–189 (MIKSALLVLE…ELPAAKNESE (189 aa)) are CPSase. Residues serine 47, glycine 241, and glycine 243 each coordinate L-glutamine. The Glutamine amidotransferase type-1 domain maps to 193–380 (HVVAYDYGVK…IDLIQTYRSS (188 aa)). The active-site Nucleophile is the cysteine 269. L-glutamine-binding residues include leucine 270, glutamine 273, asparagine 311, glycine 313, and phenylalanine 314. Residues histidine 353 and glutamate 355 contribute to the active site.

Belongs to the CarA family. Composed of two chains; the small (or glutamine) chain promotes the hydrolysis of glutamine to ammonia, which is used by the large (or ammonia) chain to synthesize carbamoyl phosphate. Tetramer of heterodimers (alpha,beta)4.

The enzyme catalyses hydrogencarbonate + L-glutamine + 2 ATP + H2O = carbamoyl phosphate + L-glutamate + 2 ADP + phosphate + 2 H(+). It carries out the reaction L-glutamine + H2O = L-glutamate + NH4(+). It functions in the pathway amino-acid biosynthesis; L-arginine biosynthesis; carbamoyl phosphate from bicarbonate: step 1/1. Its pathway is pyrimidine metabolism; UMP biosynthesis via de novo pathway; (S)-dihydroorotate from bicarbonate: step 1/3. Functionally, small subunit of the glutamine-dependent carbamoyl phosphate synthetase (CPSase). CPSase catalyzes the formation of carbamoyl phosphate from the ammonia moiety of glutamine, carbonate, and phosphate donated by ATP, constituting the first step of 2 biosynthetic pathways, one leading to arginine and/or urea and the other to pyrimidine nucleotides. The small subunit (glutamine amidotransferase) binds and cleaves glutamine to supply the large subunit with the substrate ammonia. In Pectobacterium atrosepticum (strain SCRI 1043 / ATCC BAA-672) (Erwinia carotovora subsp. atroseptica), this protein is Carbamoyl phosphate synthase small chain.